The chain runs to 480 residues: Ribosomal RNA small subunit methyltransferase F (480 aa).

Residues 126–132, glutamate 150, aspartate 177, and aspartate 195 each bind S-adenosyl-L-methionine; that span reads AAAPGSK. Cysteine 248 acts as the Nucleophile in catalysis.

It belongs to the class I-like SAM-binding methyltransferase superfamily. RsmB/NOP family.

Its subcellular location is the cytoplasm. The catalysed reaction is cytidine(1407) in 16S rRNA + S-adenosyl-L-methionine = 5-methylcytidine(1407) in 16S rRNA + S-adenosyl-L-homocysteine + H(+). Its function is as follows. Specifically methylates the cytosine at position 1407 (m5C1407) of 16S rRNA. This chain is Ribosomal RNA small subunit methyltransferase F, found in Cronobacter sakazakii (strain ATCC BAA-894) (Enterobacter sakazakii).